Consider the following 267-residue polypeptide: Indole-3-glycerol phosphate synthase 1 (267 aa).

Belongs to the TrpC family.

The enzyme catalyses 1-(2-carboxyphenylamino)-1-deoxy-D-ribulose 5-phosphate + H(+) = (1S,2R)-1-C-(indol-3-yl)glycerol 3-phosphate + CO2 + H2O. Its pathway is amino-acid biosynthesis; L-tryptophan biosynthesis; L-tryptophan from chorismate: step 4/5. In Ralstonia nicotianae (strain ATCC BAA-1114 / GMI1000) (Ralstonia solanacearum), this protein is Indole-3-glycerol phosphate synthase 1 (trpC1).